The chain runs to 262 residues: 14-3-3-like protein A (262 aa).

A disordered region spans residues 240–262 (DNAEEGGDEIKEAASKPEGEGHS). The span at 247–262 (DEIKEAASKPEGEGHS) shows a compositional bias: basic and acidic residues.

This sequence belongs to the 14-3-3 family.

The sequence is that of 14-3-3-like protein A from Hordeum vulgare (Barley).